Consider the following 210-residue polypeptide: Thymidylate kinase (210 aa).

Gly-10 to Ser-17 provides a ligand contact to ATP.

This sequence belongs to the thymidylate kinase family.

It catalyses the reaction dTMP + ATP = dTDP + ADP. Phosphorylation of dTMP to form dTDP in both de novo and salvage pathways of dTTP synthesis. This chain is Thymidylate kinase, found in Magnetococcus marinus (strain ATCC BAA-1437 / JCM 17883 / MC-1).